The chain runs to 218 residues: Guanylate kinase (218 aa).

The Guanylate kinase-like domain maps to 15–194; the sequence is GMMLVLSSPS…SIADVRAILR (180 aa). Residue 22-29 coordinates ATP; sequence SPSGAGKT.

This sequence belongs to the guanylate kinase family.

The protein resides in the cytoplasm. The enzyme catalyses GMP + ATP = GDP + ADP. In terms of biological role, essential for recycling GMP and indirectly, cGMP. This is Guanylate kinase from Rhodospirillum rubrum (strain ATCC 11170 / ATH 1.1.1 / DSM 467 / LMG 4362 / NCIMB 8255 / S1).